Consider the following 293-residue polypeptide: Putative ribose uptake protein RbsU (293 aa).

The next 10 helical transmembrane spans lie at 5–24, 34–51, 58–80, 95–114, 121–138, 153–170, 177–199, 212–234, 241–263, and 273–292; these read ALLI…TVAS, IIGA…LAVV, TGTN…IITF, TTAF…LGNW, IIGF…RMTV, RAVV…LYSA, IDGL…IYGF, ITWL…LISA, LATG…IYFL, and VITI…TVFI.

The protein belongs to the GRP transporter (TC 2.A.7.5) family.

The protein localises to the cell membrane. Its function is as follows. Could be involved in the uptake of ribose. The protein is Putative ribose uptake protein RbsU (rbsU) of Staphylococcus aureus (strain COL).